The following is a 155-amino-acid chain: MSDKSESYKVITDNRQARYLYEILETFEAGIQLTGTEVKSIRAGKVNLQDGYALLRDGEIWLINAHISPYNASGQYFNHEPRRTRKLLLHRQEIRKLIGKVEQQGLTLVPLKMYLKRGWVKVSIALGKGKKLHDKRESLKRRQDQRDIQRAMKNY.

Positions Lys135–Tyr155 are disordered.

It belongs to the SmpB family.

The protein localises to the cytoplasm. Required for rescue of stalled ribosomes mediated by trans-translation. Binds to transfer-messenger RNA (tmRNA), required for stable association of tmRNA with ribosomes. tmRNA and SmpB together mimic tRNA shape, replacing the anticodon stem-loop with SmpB. tmRNA is encoded by the ssrA gene; the 2 termini fold to resemble tRNA(Ala) and it encodes a 'tag peptide', a short internal open reading frame. During trans-translation Ala-aminoacylated tmRNA acts like a tRNA, entering the A-site of stalled ribosomes, displacing the stalled mRNA. The ribosome then switches to translate the ORF on the tmRNA; the nascent peptide is terminated with the 'tag peptide' encoded by the tmRNA and targeted for degradation. The ribosome is freed to recommence translation, which seems to be the essential function of trans-translation. The chain is SsrA-binding protein from Trichormus variabilis (strain ATCC 29413 / PCC 7937) (Anabaena variabilis).